Here is a 489-residue protein sequence, read N- to C-terminus: Aspartyl/glutamyl-tRNA(Asn/Gln) amidotransferase subunit B (489 aa).

It belongs to the GatB/GatE family. GatB subfamily. Heterotrimer of A, B and C subunits.

The enzyme catalyses L-glutamyl-tRNA(Gln) + L-glutamine + ATP + H2O = L-glutaminyl-tRNA(Gln) + L-glutamate + ADP + phosphate + H(+). It catalyses the reaction L-aspartyl-tRNA(Asn) + L-glutamine + ATP + H2O = L-asparaginyl-tRNA(Asn) + L-glutamate + ADP + phosphate + 2 H(+). In terms of biological role, allows the formation of correctly charged Asn-tRNA(Asn) or Gln-tRNA(Gln) through the transamidation of misacylated Asp-tRNA(Asn) or Glu-tRNA(Gln) in organisms which lack either or both of asparaginyl-tRNA or glutaminyl-tRNA synthetases. The reaction takes place in the presence of glutamine and ATP through an activated phospho-Asp-tRNA(Asn) or phospho-Glu-tRNA(Gln). The protein is Aspartyl/glutamyl-tRNA(Asn/Gln) amidotransferase subunit B of Polynucleobacter asymbioticus (strain DSM 18221 / CIP 109841 / QLW-P1DMWA-1) (Polynucleobacter necessarius subsp. asymbioticus).